The following is a 452-amino-acid chain: Trigger factor (452 aa).

The PPIase FKBP-type domain occupies 171–256 (GDRVTISFKG…ATKVEAPQDT (86 aa)).

It belongs to the FKBP-type PPIase family. Tig subfamily.

It is found in the cytoplasm. The enzyme catalyses [protein]-peptidylproline (omega=180) = [protein]-peptidylproline (omega=0). Its function is as follows. Involved in protein export. Acts as a chaperone by maintaining the newly synthesized protein in an open conformation. Functions as a peptidyl-prolyl cis-trans isomerase. The chain is Trigger factor from Rhodopseudomonas palustris (strain HaA2).